The primary structure comprises 259 residues: Insulin-like growth factor-binding protein 4 (259 aa).

The signal sequence occupies residues 1-22; it reads MLPLCLVAALLLSASGPRPSLG. The 81-residue stretch at 24 to 104 folds into the IGFBP N-terminal domain; it reads EAIHCPPCSE…MHGQGLCMEL (81 aa). Disulfide bonds link cysteine 28–cysteine 54, cysteine 31–cysteine 56, cysteine 39–cysteine 57, cysteine 45–cysteine 60, cysteine 68–cysteine 81, and cysteine 75–cysteine 101. The segment at 115-136 is disordered; it reads QPSDKDEGDHPNNSFSPCSPQD. Asparagine 126 carries N-linked (GlcNAc...) asparagine glycosylation. Disulfide bonds link cysteine 132–cysteine 139, cysteine 175–cysteine 205, cysteine 216–cysteine 227, and cysteine 229–cysteine 250. Positions 172-250 constitute a Thyroglobulin type-1 domain; that stretch reads QGSCQSELHR…GLEPKGELDC (79 aa). A Phosphoserine modification is found at serine 256.

Binds IGF2 more than IGF1.

Its subcellular location is the secreted. Its function is as follows. IGF-binding proteins prolong the half-life of the IGFs and have been shown to either inhibit or stimulate the growth promoting effects of the IGFs on cell culture. They alter the interaction of IGFs with their cell surface receptors. This Sus scrofa (Pig) protein is Insulin-like growth factor-binding protein 4 (IGFBP4).